The chain runs to 200 residues: Nucleoplasmin (200 aa).

Residue Ala2 is modified to N-acetylalanine. Phosphoserine is present on Ser3. Thr4 is modified (phosphothreonine). The residue at position 6 (Ser6) is a Phosphoserine. Thr8 is modified (phosphothreonine). Residues 35–39 (EDDEE) form an acidic tract A1 region. Residues 123–148 (DYSWAEEEDEGEAEGEEEEEEEEDQE) show a composition bias toward acidic residues. The tract at residues 123 to 200 (DYSWAEEEDE…GRGRKPAAKK (78 aa)) is disordered. Positions 128–148 (EEEDEGEAEGEEEEEEEEDQE) are acidic tract A2. At Ser149 the chain carries Phosphoserine. Over residues 153 to 170 (AVKRPAATKKAGQAKKKK) the composition is skewed to basic residues. Positions 155 to 170 (KRPAATKKAGQAKKKK) match the Bipartite nuclear localization signal motif. The segment at 174–176 (EDE) is acidic tract A3. Phosphoserine occurs at positions 177, 178, and 182. Residues 185–200 (KKGKGAGRGRKPAAKK) are compositionally biased toward basic residues. The residue at position 192 (Arg192) is an Omega-N-methylarginine; by PRMT5; alternate. Arg192 carries the post-translational modification Symmetric dimethylarginine; by PRMT5; alternate.

It belongs to the nucleoplasmin family. Homopentamer, when bound to H2A-H2B dimers only. Homodecamer of two stacked pentamers, when bound to H2A-H2B dimers and H3-H4 tetramers simultaneously. Interacts with the heterotetramer formed by wdr77 and prmt5. In terms of processing, activated by phosphorylation of multiple serine/threonine residues, along both core and tail domains. The level of phosphorylation gradually increases during egg maturation, reaching an average of 7-10 phosphates per monomer, so that at the time of fertilization the activity of the protein is maximum. Methylated by prmt5, yielding both monomethylated and symmetrically dimethylated Arg-192.

Its subcellular location is the nucleus. In terms of biological role, acts as a chaperone for histones, such as histone H2A-H2B, and thus regulates the assembly of nucleosome cores. Involved in chromatin remodeling, especially during fertilization and early embryonic development. May be involved in sperm chromatin decondensation during fertilization. This Xenopus laevis (African clawed frog) protein is Nucleoplasmin.